The following is an 86-amino-acid chain: ATP synthase subunit c (86 aa).

A run of 2 helical transmembrane segments spans residues 13–33 (FFATGLAYLGAGISILAAGLA) and 63–83 (ILGQAMVETSGIYALIIAFIL).

The protein belongs to the ATPase C chain family. As to quaternary structure, F-type ATPases have 2 components, F(1) - the catalytic core - and F(0) - the membrane proton channel. F(1) has five subunits: alpha(3), beta(3), gamma(1), delta(1), epsilon(1). F(0) has three main subunits: a(1), b(2) and c(10-14). The alpha and beta chains form an alternating ring which encloses part of the gamma chain. F(1) is attached to F(0) by a central stalk formed by the gamma and epsilon chains, while a peripheral stalk is formed by the delta and b chains.

It localises to the cell membrane. Functionally, f(1)F(0) ATP synthase produces ATP from ADP in the presence of a proton or sodium gradient. F-type ATPases consist of two structural domains, F(1) containing the extramembraneous catalytic core and F(0) containing the membrane proton channel, linked together by a central stalk and a peripheral stalk. During catalysis, ATP synthesis in the catalytic domain of F(1) is coupled via a rotary mechanism of the central stalk subunits to proton translocation. In terms of biological role, key component of the F(0) channel; it plays a direct role in translocation across the membrane. A homomeric c-ring of between 10-14 subunits forms the central stalk rotor element with the F(1) delta and epsilon subunits. This chain is ATP synthase subunit c, found in Acholeplasma laidlawii (strain PG-8A).